The sequence spans 269 residues: 3'(2'),5'-bisphosphate nucleotidase CysQ (269 aa).

Positions 69, 89, 91, 92, and 216 each coordinate Mg(2+). Glu69 is a substrate binding site. Substrate is bound by residues 91-94 and Asp216; that span reads LDGT.

This sequence belongs to the inositol monophosphatase superfamily. CysQ family. It depends on Mg(2+) as a cofactor.

Its subcellular location is the cell inner membrane. It catalyses the reaction adenosine 3',5'-bisphosphate + H2O = AMP + phosphate. Converts adenosine-3',5'-bisphosphate (PAP) to AMP. In Haemophilus influenzae (strain ATCC 51907 / DSM 11121 / KW20 / Rd), this protein is 3'(2'),5'-bisphosphate nucleotidase CysQ.